The following is an 84-amino-acid chain: ATP synthase subunit c (84 aa).

Helical transmembrane passes span 9 to 29 (IIGA…GFAI) and 54 to 74 (IVAG…LLFI).

This sequence belongs to the ATPase C chain family. F-type ATPases have 2 components, F(1) - the catalytic core - and F(0) - the membrane proton channel. F(1) has five subunits: alpha(3), beta(3), gamma(1), delta(1), epsilon(1). F(0) has three main subunits: a(1), b(2) and c(10-14). The alpha and beta chains form an alternating ring which encloses part of the gamma chain. F(1) is attached to F(0) by a central stalk formed by the gamma and epsilon chains, while a peripheral stalk is formed by the delta and b chains.

It is found in the cell inner membrane. Its function is as follows. F(1)F(0) ATP synthase produces ATP from ADP in the presence of a proton or sodium gradient. F-type ATPases consist of two structural domains, F(1) containing the extramembraneous catalytic core and F(0) containing the membrane proton channel, linked together by a central stalk and a peripheral stalk. During catalysis, ATP synthesis in the catalytic domain of F(1) is coupled via a rotary mechanism of the central stalk subunits to proton translocation. In terms of biological role, key component of the F(0) channel; it plays a direct role in translocation across the membrane. A homomeric c-ring of between 10-14 subunits forms the central stalk rotor element with the F(1) delta and epsilon subunits. The polypeptide is ATP synthase subunit c (Haemophilus influenzae (strain ATCC 51907 / DSM 11121 / KW20 / Rd)).